The following is a 421-amino-acid chain: Granaticin polyketide putative beta-ketoacyl synthase 1 (421 aa).

The Ketosynthase family 3 (KS3) domain occupies 2-416 (TRRVVITGVG…GFQSAMVLHR (415 aa)). Active-site for beta-ketoacyl synthase activity residues include cysteine 169, histidine 309, and histidine 346.

It belongs to the thiolase-like superfamily. Beta-ketoacyl-ACP synthases family.

It participates in antibiotic biosynthesis; granaticin biosynthesis. The polypeptide is Granaticin polyketide putative beta-ketoacyl synthase 1 (gra-orf1) (Streptomyces violaceoruber).